A 293-amino-acid polypeptide reads, in one-letter code: MPWIQLRIDTDGPNADAISDQLMEEGSLSITFEDGKDNPIYEPTLGETPLWSHTVIVALFEANFDLTPVVERLKLLPCLGDNFSHKVEQVEDKDWEREWMDNFHPIKFGDRLWICPSWREIPDPTAVNVILDPGLAFGTGTHPTTALCLEWLDGLDYSNKDVIDFGCGSGILAVAALKLGAERVTGIDIDYQAIEASKANAERNGVEDKLALYLPEDQPADLLADILVANILAGPLRELAPLIAEKVKPGGLLALSGLLQEQAEEISAFYSEWFNMDEPAHKDDWSRLTGIRK.

S-adenosyl-L-methionine is bound by residues Thr-145, Gly-166, Asp-188, and Asn-230.

It belongs to the methyltransferase superfamily. PrmA family.

Its subcellular location is the cytoplasm. It carries out the reaction L-lysyl-[protein] + 3 S-adenosyl-L-methionine = N(6),N(6),N(6)-trimethyl-L-lysyl-[protein] + 3 S-adenosyl-L-homocysteine + 3 H(+). Methylates ribosomal protein L11. This is Ribosomal protein L11 methyltransferase from Shewanella pealeana (strain ATCC 700345 / ANG-SQ1).